The sequence spans 248 residues: 26.2 kDa heat shock protein, mitochondrial (248 aa).

The N-terminal 32 residues, 1–32 (MASTVALKGRPLATLLRQLLAADAPPAATGRP), are a transit peptide targeting the mitochondrion. A disordered region spans residues 26 to 48 (PAATGRPVAAAPAASGKPVTAPA). Residues 139–248 (ATAAARRGGW…RKDVFQVNVE (110 aa)) enclose the sHSP domain.

The protein belongs to the small heat shock protein (HSP20) family. As to quaternary structure, may form oligomeric structures.

It is found in the mitochondrion. The chain is 26.2 kDa heat shock protein, mitochondrial (HSP26.2) from Oryza sativa subsp. japonica (Rice).